Here is a 424-residue protein sequence, read N- to C-terminus: 23S rRNA (uracil(1939)-C(5))-methyltransferase RlmD (424 aa).

The 56-residue stretch at 1 to 56 (MEKFPAVTVFDLDYQGRGVAKIDGQVVFIEGALPDETVTFCKTSAKKQFIEAVVDE) folds into the TRAM domain. [4Fe-4S] cluster-binding residues include C69, C75, C78, and C155. Q255, F284, N289, E305, D333, and D354 together coordinate S-adenosyl-L-methionine. Residue C380 is the Nucleophile of the active site.

The protein belongs to the class I-like SAM-binding methyltransferase superfamily. RNA M5U methyltransferase family. RlmD subfamily.

The enzyme catalyses uridine(1939) in 23S rRNA + S-adenosyl-L-methionine = 5-methyluridine(1939) in 23S rRNA + S-adenosyl-L-homocysteine + H(+). In terms of biological role, catalyzes the formation of 5-methyl-uridine at position 1939 (m5U1939) in 23S rRNA. This Dichelobacter nodosus (strain VCS1703A) protein is 23S rRNA (uracil(1939)-C(5))-methyltransferase RlmD.